Here is a 136-residue protein sequence, read N- to C-terminus: MKFIIFCAIVMAVSVSGFIVDVDTEDKWRNAFDHMLMEEFEEKMDQIEHGLLMLSEQYKELEKTKSKELKEQILRELTIAENYLRGALKFMQQEAKRTDLNMFERYNFETAVSTIEILVKDLAELAKKVKAVKSDD.

Residues 1–17 (MKFIIFCAIVMAVSVSG) form the signal peptide.

This sequence belongs to the mite group 5 allergen family. As to quaternary structure, monomer. Homodimer. Highly expressed in foregut (stomach), midgut and hindgut. Not expressed in body wall, reproductive system or body cavity.

The polypeptide is Mite allergen Der f 21.0101 (Dermatophagoides farinae (American house dust mite)).